Consider the following 452-residue polypeptide: UPF0210 protein PTH_0987 (452 aa).

It belongs to the UPF0210 family. In terms of assembly, homodimer.

This Pelotomaculum thermopropionicum (strain DSM 13744 / JCM 10971 / SI) protein is UPF0210 protein PTH_0987.